Reading from the N-terminus, the 393-residue chain is D-alanyl-D-alanine carboxypeptidase DacA (393 aa).

An N-terminal signal peptide occupies residues 1–18 (MLKRTTKIAFLSSFVALS). Residue Ser-65 is the Acyl-ester intermediate of the active site. Lys-68 (proton acceptor) is an active-site residue. Ser-128 is an active-site residue. Lys-231 is a binding site for substrate.

This sequence belongs to the peptidase S11 family.

It is found in the cell inner membrane. It carries out the reaction Preferential cleavage: (Ac)2-L-Lys-D-Ala-|-D-Ala. Also transpeptidation of peptidyl-alanyl moieties that are N-acyl substituents of D-alanine.. Its pathway is cell wall biogenesis; peptidoglycan biosynthesis. In terms of biological role, removes C-terminal D-alanyl residues from sugar-peptide cell wall precursors. This is D-alanyl-D-alanine carboxypeptidase DacA (dacA) from Haemophilus influenzae (strain ATCC 51907 / DSM 11121 / KW20 / Rd).